Consider the following 464-residue polypeptide: ATP synthase subunit beta 1 (464 aa).

An ATP-binding site is contributed by 153 to 160; it reads GGAGVGKT.

The protein belongs to the ATPase alpha/beta chains family. F-type ATPases have 2 components, CF(1) - the catalytic core - and CF(0) - the membrane proton channel. CF(1) has five subunits: alpha(3), beta(3), gamma(1), delta(1), epsilon(1). CF(0) has three main subunits: a(1), b(2) and c(9-12). The alpha and beta chains form an alternating ring which encloses part of the gamma chain. CF(1) is attached to CF(0) by a central stalk formed by the gamma and epsilon chains, while a peripheral stalk is formed by the delta and b chains.

The protein localises to the cell inner membrane. It carries out the reaction ATP + H2O + 4 H(+)(in) = ADP + phosphate + 5 H(+)(out). Functionally, produces ATP from ADP in the presence of a proton gradient across the membrane. The catalytic sites are hosted primarily by the beta subunits. In Burkholderia mallei (strain SAVP1), this protein is ATP synthase subunit beta 1.